Reading from the N-terminus, the 215-residue chain is Probable GTP-binding protein EngB (215 aa).

The 185-residue stretch at 31–215 (GPPEIAFAGR…RTAILQAVVQ (185 aa)) folds into the EngB-type G domain. Residues 39-46 (GRSNVGKS), 66-70 (GRTQE), 93-96 (DMPG), 160-163 (TKSD), and 194-196 (TSA) each bind GTP. Residues S46 and T68 each coordinate Mg(2+).

Belongs to the TRAFAC class TrmE-Era-EngA-EngB-Septin-like GTPase superfamily. EngB GTPase family. Mg(2+) serves as cofactor.

Necessary for normal cell division and for the maintenance of normal septation. The polypeptide is Probable GTP-binding protein EngB (Bartonella bacilliformis (strain ATCC 35685 / KC583 / Herrer 020/F12,63)).